The sequence spans 553 residues: Glycine betaine/proline/choline transporter VP1723 (553 aa).

Transmembrane regions (helical) follow at residues 43–63, 85–105, 122–142, 191–211, 231–251, 278–298, 310–330, 362–382, 393–413, 443–463, 490–510, and 515–535; these read NRVF…TLTF, FFLA…VTPL, AGWL…FFGV, WALH…IFSF, VWGW…VFGL, TQVV…VAGL, MILA…MAIL, WTAF…MFIA, FIIC…TAFG, VMPF…VFFI, VFWC…GGLA, and MAVT…VSLI.

It belongs to the BCCT transporter (TC 2.A.15) family.

It localises to the cell inner membrane. In terms of biological role, involved in the uptake of osmoprotectants. Can transport glycine betaine, proline and choline. The chain is Glycine betaine/proline/choline transporter VP1723 from Vibrio parahaemolyticus serotype O3:K6 (strain RIMD 2210633).